Consider the following 454-residue polypeptide: MTKYFGTDGVRGIANKELSPEMAFRLGRTGGYVLTQHKEDASRRPLVLVARDTRISGQMLADALIAGLLSVGIEVLDLGVITTPAVAYLIKIQGADAGIQISASHNPVADNGIKFFGADGYKLSDDTEEEIEALLDAPEDKLPRPAAEGLGTVDDYPEGALKYTQFLEQTLADDLSGIHVCLDGANGATSGLVSRIFADLETDFDTMAISPDGLNINANVGSTHPQALSKFVVEKGADVGLAFDGDGDRCIAVDEQGNIVDGDKIMFILGSYMKSQGRLKQDTVVTTVMSNLGLYKALEANGMKSVQTAVGDRHVVEAMRKDGYNIGGEQSGHVILFDYHNTGDGMLTGIHLLNVMKKTGKKLSELAAPVQDYPQKLVNVKVADKENWQAYPEIQSAIDTVEKEMAGDGRVLVRPSGTEPLLRVMAEAKTEDLVSRYVDQIVDVVKQEMGSKED.

Ser-104 serves as the catalytic Phosphoserine intermediate. Residues Ser-104, Asp-244, Asp-246, and Asp-248 each coordinate Mg(2+). At Ser-104 the chain carries Phosphoserine.

Belongs to the phosphohexose mutase family. The cofactor is Mg(2+). Activated by phosphorylation.

It catalyses the reaction alpha-D-glucosamine 1-phosphate = D-glucosamine 6-phosphate. Catalyzes the conversion of glucosamine-6-phosphate to glucosamine-1-phosphate. This is Phosphoglucosamine mutase from Lacticaseibacillus paracasei (strain ATCC 334 / BCRC 17002 / CCUG 31169 / CIP 107868 / KCTC 3260 / NRRL B-441) (Lactobacillus paracasei).